Consider the following 273-residue polypeptide: Shikimate dehydrogenase (NADP(+)) (273 aa).

Residues Ser-15–Ser-17 and Thr-62 contribute to the shikimate site. The active-site Proton acceptor is the Lys-66. Glu-78 contributes to the NADP(+) binding site. Asn-87 and Asp-102 together coordinate shikimate. NADP(+)-binding positions include Gly-126 to Ala-130, Asn-149 to Arg-154, Ile-215, and Gly-238.

It belongs to the shikimate dehydrogenase family. In terms of assembly, homodimer.

It catalyses the reaction shikimate + NADP(+) = 3-dehydroshikimate + NADPH + H(+). It functions in the pathway metabolic intermediate biosynthesis; chorismate biosynthesis; chorismate from D-erythrose 4-phosphate and phosphoenolpyruvate: step 4/7. In terms of biological role, involved in the biosynthesis of the chorismate, which leads to the biosynthesis of aromatic amino acids. Catalyzes the reversible NADPH linked reduction of 3-dehydroshikimate (DHSA) to yield shikimate (SA). The protein is Shikimate dehydrogenase (NADP(+)) of Desulfitobacterium hafniense (strain Y51).